The primary structure comprises 212 residues: Nodulation protein NolU (212 aa).

The protein is Nodulation protein NolU (nolU) of Sinorhizobium fredii (strain NBRC 101917 / NGR234).